Here is a 358-residue protein sequence, read N- to C-terminus: Cholesterol galactosyltransferase (358 aa).

It belongs to the glycosyltransferase 2 family.

The enzyme catalyses cholesterol + UDP-alpha-D-galactose = cholesteryl 3-beta-D-galactoside + UDP + H(+). Its pathway is glycolipid biosynthesis. Functionally, galactosyltransferase involved in the synthesis of cholesterol glycolipids, which are formed by the use of host-derived cholesterol and have been shown to be immunogenic, and possibly contribute to Lyme disease pathogenesis. Catalyzes the formation of cholesteryl beta-D-galactopyranoside (CGal) from cholesterol and UDP-alpha-D-galactose. Cannot use GDP-mannose. The polypeptide is Cholesterol galactosyltransferase (Borreliella burgdorferi (strain ATCC 35210 / DSM 4680 / CIP 102532 / B31) (Borrelia burgdorferi)).